The primary structure comprises 353 residues: Trans-enoyl reductase fsa3 (353 aa).

An NADP(+)-binding site is contributed by 45 to 48 (VDTK). 131–138 (ISFMTTGL) contacts substrate. Residues 166 to 169 (SSAT), 189 to 192 (SPRN), tyrosine 207, and 254 to 255 (LE) each bind NADP(+). Position 275–279 (275–279 (GPQML)) interacts with substrate. 344 to 345 (IS) contributes to the NADP(+) binding site.

It belongs to the zinc-containing alcohol dehydrogenase family. As to quaternary structure, monomer.

It catalyses the reaction L-serine + 7 malonyl-CoA + acetyl-CoA + 2 S-adenosyl-L-methionine + ATP + 8 NADPH + 11 H(+) = (5S)-3-[(2E,6R,8E,10E,12E)-2,6-dimethyltetradeca-2,8,10,12-tetraenoyl]-5-(hydroxymethyl)pyrrolidine-2,4-dione + AMP + 2 S-adenosyl-L-homocysteine + 7 CO2 + diphosphate + 8 NADP(+) + 8 CoA + 6 H2O. It functions in the pathway mycotoxin biosynthesis. Functionally, trans-enoyl reductase; part of the gene cluster that mediates the biosynthesis of HIV-1 integrase inhibitor equisetin and of fusarisetin A, both trans-fused decalin-containing tetramic acids showing also antimicrobial activity. The PKS module of fsa1 together with the enoylreductase fsa3 catalyze the formation of the polyketide unit which is then conjugated to L-serine by the condensation domain of the fsa1 NRPS module. Activity of the Dieckmann cyclase domain (RED) results in release of the Dieckmann product intermediate. Diels-Alderase fsa2 is involved in endo-selective Diels-Alder cycloaddition to form the decalin ring, leading to the production of N-desmethylequisetin also called trichosetin. Subsequent N-methylation is carried out by fsa4 to give equisetin. The enzymatic gene responsible for the conversion of equisetin to fusarisetin A has not been identified yet and is probably located outside of the fsa cluster. In Fusarium sp. (strain FN080326), this protein is Trans-enoyl reductase fsa3.